Reading from the N-terminus, the 641-residue chain is Calpain-6 (641 aa).

The 318-residue stretch at 26-343 (LFCDPTFLPE…FHKLNVCRNV (318 aa)) folds into the Calpain catalytic domain. The tract at residues 344–495 (NNPIFGRKEL…IFSEVPVQLR (152 aa)) is domain III. The C2 domain occupies 498-621 (TLDMPKMSCW…YLRKKGGPTA (124 aa)).

Belongs to the peptidase C2 family. In terms of assembly, interacts (via domain III) with microtubules. Interacts (via domain II) with ARHGEF2 (via the N-terminal zinc finger). Expressed only in placenta.

The protein resides in the cytoplasm. Its subcellular location is the perinuclear region. It localises to the cytoskeleton. It is found in the spindle. Its function is as follows. Microtubule-stabilizing protein that may be involved in the regulation of microtubule dynamics and cytoskeletal organization. May act as a regulator of RAC1 activity through interaction with ARHGEF2 to control lamellipodial formation and cell mobility. Does not seem to have protease activity as it has lost the active site residues. This Homo sapiens (Human) protein is Calpain-6 (CAPN6).